The chain runs to 154 residues: Myoglobin (154 aa).

Residues 2 to 148 (GLSDGEWHLV…FRNDIAAKIK (147 aa)) form the Globin domain. Serine 4 carries the phosphoserine modification. Histidine 65 contributes to the nitrite binding site. O2 is bound at residue histidine 65. Threonine 68 is modified (phosphothreonine). Histidine 94 provides a ligand contact to heme b.

This sequence belongs to the globin family. Monomeric.

It is found in the cytoplasm. The protein localises to the sarcoplasm. It carries out the reaction Fe(III)-heme b-[protein] + nitric oxide + H2O = Fe(II)-heme b-[protein] + nitrite + 2 H(+). The enzyme catalyses H2O2 + AH2 = A + 2 H2O. In terms of biological role, monomeric heme protein which primary function is to store oxygen and facilitate its diffusion within muscle tissues. Reversibly binds oxygen through a pentacoordinated heme iron and enables its timely and efficient release as needed during periods of heightened demand. Depending on the oxidative conditions of tissues and cells, and in addition to its ability to bind oxygen, it also has a nitrite reductase activity whereby it regulates the production of bioactive nitric oxide. Under stress conditions, like hypoxia and anoxia, it also protects cells against reactive oxygen species thanks to its pseudoperoxidase activity. The sequence is that of Myoglobin (MB) from Pusa sibirica (Baikal seal).